The chain runs to 372 residues: MSNADEPPQKTNQPPSSSLTPPSLFSLPVDIVLNILALVPKRYYPILCCVSKSLRSLIRSPEIHKTRSLHGKDSLYLCFSTRTTYPNRNRTTFHWFTLRRNDNKMNTTENVFVSIDVPYRPGHASYPLSNIAIDTEIYCIPGYNFPSSSIVWIFDTQSGQWRQGPSMQVERLSATVGLVGGKIYVIGGNRGEEILAEVFDLKTQTWEAAPIPKAKDRNEWFTHASVSLDRKVYALNSREYMNSYDTRDGSYQRYTIPEDNWWKTGKCVIDNVLFVYFLRFGLMWYDSELMLWRVVYGLDLDKARCIGIGEYYGKLAFIWGKPSNVSESKEIWCRMIGLLRSEVGIHGTEEPSQLLRIVPNNYSLRHCLSLSG.

Residues 1 to 13 (MSNADEPPQKTNQ) show a composition bias toward polar residues. Residues 1–21 (MSNADEPPQKTNQPPSSSLTP) form a disordered region. Residues 21–67 (PPSLFSLPVDIVLNILALVPKRYYPILCCVSKSLRSLIRSPEIHKTR) form the F-box domain. Kelch repeat units lie at residues 136-181 (EIYC…LVGG) and 183-228 (IYVI…SVSL).

This Arabidopsis thaliana (Mouse-ear cress) protein is F-box/kelch-repeat protein At2g44630.